The following is a 395-amino-acid chain: ADP-ribosylation factor-like protein 13A (395 aa).

Residues Gly-28 to Ser-35, Asp-71 to Asp-75, and Asn-130 to Asp-133 each bind GTP.

Belongs to the small GTPase superfamily. Arf family.

The protein is ADP-ribosylation factor-like protein 13A (Arl13a) of Rattus norvegicus (Rat).